A 517-amino-acid polypeptide reads, in one-letter code: Benzoate 4-monooxygenase bphA (517 aa).

Residues 4 to 24 (LLLSPYGAYLGLALLVLYYLL) form a helical membrane-spanning segment. 2 N-linked (GlcNAc...) asparagine glycosylation sites follow: Asn-282 and Asn-325. Residue Cys-461 participates in heme binding.

The protein belongs to the cytochrome P450 family. Heme serves as cofactor.

It localises to the membrane. It carries out the reaction benzoate + reduced [NADPH--hemoprotein reductase] + O2 = 4-hydroxybenzoate + oxidized [NADPH--hemoprotein reductase] + H2O + H(+). In terms of biological role, cytochrome P450 monooxygenase; part of the benzoic acid degradation pathway also known as the protocatechuic acid pathway. Benzoic acid debradation begins with the conversion of benzoic acid into 4-hydroxybenzoic acid through hydroxylation by the benzoate-4-monooxygenase bphA, and its partner NADPH-cytochrome P450 reductase cprA which act as a mediator in electron donation from NADPH. 4-Hydroxybenzoic acid is then converted into 3,4-dihydroxybenzoic acid (also called protocatechuic acid) by the p-hydroxybenzoate-m-hydroxylase phhA. Protocatechuic acid is converted into 3-carboxy-cis,cis-muconic acid by the intradiol ring-cleavage dioxygenase prcA, which is further metabolized through the 3-oxoadipate pathway to finally enter the tricarboxylic acid cycle (TCA). In Aspergillus niger (strain ATCC MYA-4892 / CBS 513.88 / FGSC A1513), this protein is Benzoate 4-monooxygenase bphA.